The primary structure comprises 311 residues: Metal-staphylopine import system permease protein CntB (311 aa).

The next 6 helical transmembrane spans lie at 9 to 29, 105 to 125, 139 to 159, 173 to 193, 237 to 257, and 274 to 294; these read IALM…LTYI, LTII…VVSA, VAFF…IIYV, GPES…GIYF, IFCM…YIFA, and FPVI…FNTL. The region spanning 99–295 is the ABC transmembrane type-1 domain; the sequence is FMNTLKLTII…VLFIVFNTLA (197 aa).

It belongs to the binding-protein-dependent transport system permease family. The complex is composed of two ATP-binding proteins (CntD and CntF), two transmembrane proteins (CntB and CntC) and a solute-binding protein (CntA).

It is found in the cell membrane. Functionally, part of the ABC transporter complex CntABCDF (Opp1) involved in the uptake of metal in complex with the metallophore staphylopine (StP). May be involved in the import of a large array of divalent metals ions such as nickel, cobalt, zinc, copper and iron. Probably responsible for the translocation of the substrate across the membrane. The chain is Metal-staphylopine import system permease protein CntB from Staphylococcus aureus (strain Mu50 / ATCC 700699).